A 181-amino-acid chain; its full sequence is MKNNSIRTVVATGIGAALFIIIGMFVNIPIFGNTSIQLQYAVQALFSVIFGPITGFFMGFIGHALKDGIQYGNISWAWVLASGITGLVIGLFGKKYDVTMGKFSVMSMIWFNLAQALGLLIGYGVVTPIGDKIQFAQAWSYLYAQSFVAGVANFITIAIGGTLLLAIYASSRTQSGSLTKD.

5 helical membrane-spanning segments follow: residues 11-31 (ATGI…IPIF), 45-65 (LFSV…GHAL), 72-92 (GNIS…IGLF), 109-129 (IWFN…VTPI), and 147-167 (FVAG…LLAI).

Belongs to the UPF0397 family.

The protein resides in the cell membrane. This is UPF0397 protein STER_0346 from Streptococcus thermophilus (strain ATCC BAA-491 / LMD-9).